An 87-amino-acid chain; its full sequence is Large ribosomal subunit protein bL31B (87 aa).

This sequence belongs to the bacterial ribosomal protein bL31 family. Type B subfamily. Part of the 50S ribosomal subunit.

In Burkholderia vietnamiensis (strain G4 / LMG 22486) (Burkholderia cepacia (strain R1808)), this protein is Large ribosomal subunit protein bL31B.